The primary structure comprises 329 residues: Acetoacetyl CoA synthase NphT7 (329 aa).

Active-site residues include Cys-115, His-256, and Asn-286.

The protein belongs to the thiolase-like superfamily. FabH family. As to quaternary structure, homodimer.

It localises to the cytoplasm. It catalyses the reaction malonyl-CoA + acetyl-CoA + H(+) = acetoacetyl-CoA + CO2 + CoA. Its pathway is metabolic intermediate biosynthesis; (R)-mevalonate biosynthesis. Its function is as follows. Catalyzes the condensation of acetyl-CoA and malonyl-CoA to form acetoacetyl-CoA and CoA. Does not accept malonyl-[acyl-carrier-protein] as a substrate. Can also convert malonyl-CoA into acetyl-CoA via decarboxylation of malonyl-CoA. In Streptomyces sp. (strain CL190), this protein is Acetoacetyl CoA synthase NphT7 (nphT7).